A 277-amino-acid polypeptide reads, in one-letter code: ATP synthase subunit delta (277 aa).

This sequence belongs to the ATPase delta chain family. In terms of assembly, F-type ATPases have 2 components, F(1) - the catalytic core - and F(0) - the membrane proton channel. F(1) has five subunits: alpha(3), beta(3), gamma(1), delta(1), epsilon(1). F(0) has three main subunits: a(1), b(2) and c(10-14). The alpha and beta chains form an alternating ring which encloses part of the gamma chain. F(1) is attached to F(0) by a central stalk formed by the gamma and epsilon chains, while a peripheral stalk is formed by the delta and b chains.

It localises to the cell membrane. F(1)F(0) ATP synthase produces ATP from ADP in the presence of a proton or sodium gradient. F-type ATPases consist of two structural domains, F(1) containing the extramembraneous catalytic core and F(0) containing the membrane proton channel, linked together by a central stalk and a peripheral stalk. During catalysis, ATP synthesis in the catalytic domain of F(1) is coupled via a rotary mechanism of the central stalk subunits to proton translocation. In terms of biological role, this protein is part of the stalk that links CF(0) to CF(1). It either transmits conformational changes from CF(0) to CF(1) or is implicated in proton conduction. The chain is ATP synthase subunit delta from Frankia alni (strain DSM 45986 / CECT 9034 / ACN14a).